Reading from the N-terminus, the 172-residue chain is Shikimate kinase (172 aa).

Position 14–19 (14–19 (GAGKST)) interacts with ATP. Serine 18 is a binding site for Mg(2+). Substrate contacts are provided by aspartate 36, arginine 60, and glycine 82. Arginine 120 provides a ligand contact to ATP. Arginine 139 contributes to the substrate binding site. Glutamine 156 contributes to the ATP binding site.

The protein belongs to the shikimate kinase family. Monomer. Mg(2+) is required as a cofactor.

The protein localises to the cytoplasm. It carries out the reaction shikimate + ATP = 3-phosphoshikimate + ADP + H(+). It participates in metabolic intermediate biosynthesis; chorismate biosynthesis; chorismate from D-erythrose 4-phosphate and phosphoenolpyruvate: step 5/7. Functionally, catalyzes the specific phosphorylation of the 3-hydroxyl group of shikimic acid using ATP as a cosubstrate. This chain is Shikimate kinase, found in Aliivibrio fischeri (strain ATCC 700601 / ES114) (Vibrio fischeri).